A 1774-amino-acid chain; its full sequence is Protein TIC 214 (1774 aa).

6 consecutive transmembrane segments (helical) span residues 19–39, 68–88, 91–111, 133–153, 176–196, and 227–247; these read IINS…FSIG, FIAG…HLAL, PHTI…WNNH, VFLN…SSML, VGWL…LVWI, and IFSI…PSPI. A compositionally biased stretch (basic and acidic residues) spans 254–268; that stretch reads GTSETEERGGTKQDQ. Residues 254 to 275 are disordered; sequence GTSETEERGGTKQDQEVSTEEA.

This sequence belongs to the TIC214 family. Part of the Tic complex.

It localises to the plastid. The protein localises to the chloroplast inner membrane. In terms of biological role, involved in protein precursor import into chloroplasts. May be part of an intermediate translocation complex acting as a protein-conducting channel at the inner envelope. This Aethionema cordifolium (Lebanon stonecress) protein is Protein TIC 214.